Consider the following 330-residue polypeptide: Acrylyl-CoA reductase AcuI (330 aa).

NADP(+) contacts are provided by residues Tyr-44, 159-162, 181-183, Arg-201, Leu-247, and Ser-272; these read AGGV and TGR.

It belongs to the zinc-containing alcohol dehydrogenase family. Acrylyl-CoA reductase subfamily. Homodimer.

The protein resides in the cytoplasm. It catalyses the reaction propanoyl-CoA + NADP(+) = acryloyl-CoA + NADPH + H(+). In terms of biological role, probably catalyzes the NADPH-dependent reduction of acrylyl-CoA to propanoyl-CoA. Restores acrylate resistance when expressed in an E.coli strain K12 acuI deletion. In Ruegeria pomeroyi (strain ATCC 700808 / DSM 15171 / DSS-3) (Silicibacter pomeroyi), this protein is Acrylyl-CoA reductase AcuI (acuI).